The following is a 77-amino-acid chain: MGSFSIWHWLVVGILVLLLFGKGRFSDMMGDVAKGIKSFKKGMSEDDAPTPAPKQIDAQRAPDLSATPTPTAETENR.

The helical transmembrane segment at 1–21 (MGSFSIWHWLVVGILVLLLFG) threads the bilayer. A disordered region spans residues 41–77 (KGMSEDDAPTPAPKQIDAQRAPDLSATPTPTAETENR). A compositionally biased stretch (polar residues) spans 66–77 (ATPTPTAETENR).

The protein belongs to the TatA/E family. The Tat system comprises two distinct complexes: a TatABC complex, containing multiple copies of TatA, TatB and TatC subunits, and a separate TatA complex, containing only TatA subunits. Substrates initially bind to the TatABC complex, which probably triggers association of the separate TatA complex to form the active translocon.

The protein localises to the cell inner membrane. Part of the twin-arginine translocation (Tat) system that transports large folded proteins containing a characteristic twin-arginine motif in their signal peptide across membranes. TatA could form the protein-conducting channel of the Tat system. This is Sec-independent protein translocase protein TatA from Sphingopyxis alaskensis (strain DSM 13593 / LMG 18877 / RB2256) (Sphingomonas alaskensis).